We begin with the raw amino-acid sequence, 444 residues long: Tubulin beta chain (444 aa).

The GTP site is built by Gln11, Glu69, Ser138, Gly142, Thr143, Gly144, Asn204, and Asn226. Residue Glu69 participates in Mg(2+) binding.

Belongs to the tubulin family. As to quaternary structure, dimer of alpha and beta chains. A typical microtubule is a hollow water-filled tube with an outer diameter of 25 nm and an inner diameter of 15 nM. Alpha-beta heterodimers associate head-to-tail to form protofilaments running lengthwise along the microtubule wall with the beta-tubulin subunit facing the microtubule plus end conferring a structural polarity. Microtubules usually have 13 protofilaments but different protofilament numbers can be found in some organisms and specialized cells. The cofactor is Mg(2+).

The protein localises to the cytoplasm. It is found in the cytoskeleton. Functionally, tubulin is the major constituent of microtubules, a cylinder consisting of laterally associated linear protofilaments composed of alpha- and beta-tubulin heterodimers. Microtubules grow by the addition of GTP-tubulin dimers to the microtubule end, where a stabilizing cap forms. Below the cap, tubulin dimers are in GDP-bound state, owing to GTPase activity of alpha-tubulin. In Trichuris trichiura (Whipworm), this protein is Tubulin beta chain.